The following is a 72-amino-acid chain: Translation initiation factor IF-1 (72 aa).

One can recognise an S1-like domain in the interval 1–72 (MSKDDVIQMQ…SRARIVFRAK (72 aa)).

The protein belongs to the IF-1 family. Component of the 30S ribosomal translation pre-initiation complex which assembles on the 30S ribosome in the order IF-2 and IF-3, IF-1 and N-formylmethionyl-tRNA(fMet); mRNA recruitment can occur at any time during PIC assembly.

The protein resides in the cytoplasm. Its function is as follows. One of the essential components for the initiation of protein synthesis. Stabilizes the binding of IF-2 and IF-3 on the 30S subunit to which N-formylmethionyl-tRNA(fMet) subsequently binds. Helps modulate mRNA selection, yielding the 30S pre-initiation complex (PIC). Upon addition of the 50S ribosomal subunit IF-1, IF-2 and IF-3 are released leaving the mature 70S translation initiation complex. This chain is Translation initiation factor IF-1, found in Albidiferax ferrireducens (strain ATCC BAA-621 / DSM 15236 / T118) (Rhodoferax ferrireducens).